A 379-amino-acid chain; its full sequence is MRMSAAMFSSFRCKTRSSKVMLRRGRKRRRRIEDALVAPEIPLDLLIEILTKLPAKSLMRFKCVSKLWSSLIRSRFFSNCYLTVKTPRRPPRLYMSLVDHLLCNSLMVCHYPCESVLLSSSSSAESLEQNLTIAGMGGRNMVVLRGLILYVVCRTASIYNPTTRQSVTLPAVKSNILAQKSHWNSLLYFFGYDPVLDQYKVVCTVALFSKRLKRITSEHWVFVLEPGGSWKRIEFDQPHLPTRLGLCVNGVIYYLASTWKRRDIVVSFDVRSEEFSMIQGPLKVSAFSESVGFIEYGGKPAVFDYTMMKQTGLVDLWVLEDAGKWSRKSLVLQPCQMHLVDNDIEFNVEGTTQNGEVILAPETIISPYYILFMTSKRMI.

Residues 35-84 (ALVAPEIPLDLLIEILTKLPAKSLMRFKCVSKLWSSLIRSRFFSNCYLTV) form the F-box domain.

This Arabidopsis thaliana (Mouse-ear cress) protein is Putative F-box protein At5g62660.